The primary structure comprises 401 residues: Beta-lactamase (401 aa).

The signal sequence occupies residues 1-39 (MKLFTSTLTAKKSSTHKPLISLALSVLISTLLISETAQA). Ser-102 acts as the Acyl-ester intermediate in catalysis. The Proton acceptor role is filled by Tyr-188. Residue 353–355 (KTG) participates in substrate binding.

It belongs to the class-C beta-lactamase family.

It localises to the secreted. The enzyme catalyses a beta-lactam + H2O = a substituted beta-amino acid. Its function is as follows. This protein is a serine beta-lactamase with a substrate specificity for cephalosporins. This chain is Beta-lactamase (ampC), found in Psychrobacter immobilis.